We begin with the raw amino-acid sequence, 539 residues long: MYLSRFLSIHALWVTVSSVMQPYPLVWGHYDLCKTQIYTEEGKVWDYMACQPESTDMTKYLKVKLDPPDITCGDPPETFCAMGNPYMCNNECDASTPELAHPPELMFDFEGRHPSTFWQSATWKEYPKPLQVNITLSWSKTIELTDNIVITFESGRPDQMILEKSLDYGRTWQPYQYYATDCLDAFHMDPKSVKDLSQHTVLEIICTEEYSTGYTTNSKIIHFEIKDRFAFFAGPRLRNMASLYGQLDTTKKLRDFFTVTDLRIRLLRPAVGEIFVDELHLARYFYAISDIKVRGRCKCNLHATVCVYDNSKLTCECEHNTTGPDCGKCKKNYQGRPWSPGSYLPIPKGTANTCIPSISSIGNCECFGHSNRCSYIDLLNTVICVSCKHNTRGQHCELCRLGYFRNASAQLDDENVCIECYCNPLGSIHDRCNGSGFCECKTGTTGPKCDECLPGNSWHYGCQPNVCDNELLHCQNGGTCHNNVRCLCPAAYTGILCEKLRCEEAGSCGSDSGQGAPPHGSPALLLLTTLLGTASPLVF.

An N-terminal signal peptide occupies residues 1-28; sequence MYLSRFLSIHALWVTVSSVMQPYPLVWG. 3 cysteine pairs are disulfide-bonded: C33/C50, C72/C92, and C80/C88. A Laminin N-terminal domain is found at 46-296; sequence DYMACQPEST…AISDIKVRGR (251 aa). The segment at 80-91 is NGL discriminant loop I; it reads CAMGNPYMCNNE. N133 is a glycosylation site (N-linked (GlcNAc...) asparagine). A disulfide bond links C182 and C206. The NGL discriminant loop II stretch occupies residues 208–214; it reads EEYSTGY. Residues 273-275 are NGL discriminant loop III; sequence EIF. Disulfide bonds link C297-C306, C299-C315, C317-C326, C329-C354, C364-C373, C366-C384, C387-C396, C399-C417, C420-C432, C422-C438, C440-C449, C452-C462, C467-C480, C474-C486, and C488-C497. 3 consecutive Laminin EGF-like domains span residues 297–356, 364–419, and 420–469; these read CKCN…TCIP, CECF…VCIE, and CYCN…VCDN. N320 carries an N-linked (GlcNAc...) asparagine glycan. N-linked (GlcNAc...) asparagine glycosylation is present at N406. The N-linked (GlcNAc...) asparagine glycan is linked to N433. Residue S510 is the site of GPI-anchor amidated serine attachment. Residues 511–539 constitute a propeptide, removed in mature form; the sequence is DSGQGAPPHGSPALLLLTTLLGTASPLVF.

In terms of assembly, interacts with NGL1. In terms of processing, N-glycosylated. In terms of tissue distribution, highly expressed in the thalamus, with very low expression, if any, in other tissues.

The protein localises to the cell membrane. Functionally, involved in controlling patterning and neuronal circuit formation at the laminar, cellular, subcellular and synaptic levels. Promotes neurite outgrowth of both axons and dendrites. In Homo sapiens (Human), this protein is Netrin-G1 (NTNG1).